The chain runs to 638 residues: Methyl-accepting chemotaxis protein McpQ (638 aa).

The helical transmembrane segment at 18–38 (LGLGFGLVLLLTLAITLTGWH) threads the bilayer. The HBM domain maps to 45–282 (DRGDKLGNIS…SQTEVRDAAA (238 aa)). Residues 287–307 (TLLTVATVLALALGLLAAWAI) traverse the membrane as a helical segment. The HAMP domain maps to 309–361 (RQIIIPLRQTLRAAERVASGDLTQSLQVQRRDELGQLQASMHRMTQGLRELIG). A Methyl-accepting transducer domain is found at 366-602 (GVTQIASAAE…EINRSVMNVR (237 aa)).

This sequence belongs to the methyl-accepting chemotaxis (MCP) protein family.

The protein resides in the cell membrane. Its function is as follows. Chemotactic-signal transducers respond to changes in the concentration of attractants and repellents in the environment, transduce a signal from the outside to the inside of the cell, and facilitate sensory adaptation through the variation of the level of methylation. McpQ recognizes specifically citrate and citrate/metal(2+) complexes. Binds citrate/metal(2+) complexes with higher affinity than free citrate, and mediates preferentially chemotaxis toward citrate/metal(2+) complexes. This Pseudomonas putida (strain ATCC 47054 / DSM 6125 / CFBP 8728 / NCIMB 11950 / KT2440) protein is Methyl-accepting chemotaxis protein McpQ.